Consider the following 370-residue polypeptide: Aspartate-semialdehyde dehydrogenase (370 aa).

NADP(+)-binding positions include 10–13 (RGMV), 37–38 (TS), and Gln-73. Residue Arg-102 participates in phosphate binding. Cys-135 (acyl-thioester intermediate) is an active-site residue. Residue Gln-162 coordinates substrate. NADP(+) contacts are provided by residues 165–166 (SG) and Pro-193. Residue Glu-241 participates in substrate binding. Lys-244 is a binding site for phosphate. Residue Arg-268 participates in substrate binding. His-275 functions as the Proton acceptor in the catalytic mechanism. Gln-351 contacts NADP(+).

This sequence belongs to the aspartate-semialdehyde dehydrogenase family. In terms of assembly, homodimer.

The catalysed reaction is L-aspartate 4-semialdehyde + phosphate + NADP(+) = 4-phospho-L-aspartate + NADPH + H(+). The protein operates within amino-acid biosynthesis; L-lysine biosynthesis via DAP pathway; (S)-tetrahydrodipicolinate from L-aspartate: step 2/4. It participates in amino-acid biosynthesis; L-methionine biosynthesis via de novo pathway; L-homoserine from L-aspartate: step 2/3. Its pathway is amino-acid biosynthesis; L-threonine biosynthesis; L-threonine from L-aspartate: step 2/5. Functionally, catalyzes the NADPH-dependent formation of L-aspartate-semialdehyde (L-ASA) by the reductive dephosphorylation of L-aspartyl-4-phosphate. The protein is Aspartate-semialdehyde dehydrogenase (asd) of Pseudomonas aeruginosa (strain ATCC 15692 / DSM 22644 / CIP 104116 / JCM 14847 / LMG 12228 / 1C / PRS 101 / PAO1).